Reading from the N-terminus, the 657-residue chain is Histidine ammonia-lyase (657 aa).

A cross-link (5-imidazolinone (Ala-Gly)) is located at residues 253 to 255 (ASG). Residue Ser254 is modified to 2,3-didehydroalanine (Ser). A Phosphothreonine modification is found at Thr396. Ser635 carries the post-translational modification Phosphoserine. Thr637 is modified (phosphothreonine). Ser648 is subject to Phosphoserine.

It belongs to the PAL/histidase family. Post-translationally, contains an active site 4-methylidene-imidazol-5-one (MIO), which is formed autocatalytically by cyclization and dehydration of residues Ala-Ser-Gly.

The catalysed reaction is L-histidine = trans-urocanate + NH4(+). It functions in the pathway amino-acid degradation; L-histidine degradation into L-glutamate; N-formimidoyl-L-glutamate from L-histidine: step 1/3. The chain is Histidine ammonia-lyase (HAL) from Bos taurus (Bovine).